We begin with the raw amino-acid sequence, 55 residues long: Large ribosomal subunit protein bL33 (55 aa).

It belongs to the bacterial ribosomal protein bL33 family.

This is Large ribosomal subunit protein bL33 from Aeromonas hydrophila subsp. hydrophila (strain ATCC 7966 / DSM 30187 / BCRC 13018 / CCUG 14551 / JCM 1027 / KCTC 2358 / NCIMB 9240 / NCTC 8049).